Here is a 427-residue protein sequence, read N- to C-terminus: Glutamate-1-semialdehyde 2,1-aminomutase (427 aa).

At Lys-265 the chain carries N6-(pyridoxal phosphate)lysine.

Belongs to the class-III pyridoxal-phosphate-dependent aminotransferase family. HemL subfamily. Homodimer. The cofactor is pyridoxal 5'-phosphate.

It is found in the cytoplasm. The enzyme catalyses (S)-4-amino-5-oxopentanoate = 5-aminolevulinate. The protein operates within porphyrin-containing compound metabolism; protoporphyrin-IX biosynthesis; 5-aminolevulinate from L-glutamyl-tRNA(Glu): step 2/2. This chain is Glutamate-1-semialdehyde 2,1-aminomutase, found in Pseudomonas savastanoi pv. phaseolicola (strain 1448A / Race 6) (Pseudomonas syringae pv. phaseolicola (strain 1448A / Race 6)).